The sequence spans 612 residues: MLLLVLLFVFISATNASDVGRRELEKHFDVGDSSLDSVGDVLLKLKKLAHQRAFGNREFGHDAEEDSKKPVAISVLQPTVAKDVSPYLFEGDIFLSKKQAINILKEVSGIESKSKPNVRGRRSFDASPESKWPTTAPIKYRFHESIDFYAVSNIIKAIRYWENVTCLEFENSPDVADNEDFIEFFQGQGCYSMIGRNGGRQGVSIGENCVKAGVIEHEIGHAIGMWHEQSRPDAQSYIKVESDFILPSYVSDFLQRDKDIDTLGLPYDLGSVMHYGSTAFSVDQSSKTLITRDPLYQSTIGQRETLSFLDIETINKAYCSDRCSGSNDCKNGGYPHPKQCDTCLCPNGLSGPKCEDFEPPRKAECGGKIVVKEEWQSIESPGFPDPGYDPDQKCNWVFEVAGKRIEFEFIEEFSFLCTSTCVDYVEMKISADLRPTGFRWCCFNIPKGSFVSELNIAVIIFRSQLTNDVGFKLQARATDLPARTTPAPVVITTTPVPTTIEGTDQWAEWGSWSQCSRSCGGCGIMSRVRVCRTKQCKGRRQEFSTCNLKACPIDKHCAKLLANDKICNGRVCTKASQALSGCLEPQCCPPFINVDGTCQSDSPLLNDFELAK.

Residues 1 to 16 (MLLLVLLFVFISATNA) form the signal peptide. A glycan (N-linked (GlcNAc...) asparagine) is linked at Asn-15. The propeptide occupies 17 to 122 (SDVGRRELEK…KSKPNVRGRR (106 aa)). Residues 123-320 (SFDASPESKW…IETINKAYCS (198 aa)) enclose the Peptidase M12A domain. Asn-163 carries an N-linked (GlcNAc...) asparagine glycan. 8 cysteine pairs are disulfide-bonded: Cys-166-Cys-319, Cys-190-Cys-209, Cys-329-Cys-343, Cys-345-Cys-354, Cys-365-Cys-394, Cys-515-Cys-546, Cys-519-Cys-551, and Cys-531-Cys-536. Zn(2+) is bound at residue His-217. The active site involves Glu-218. Zn(2+) contacts are provided by His-221 and His-227. Positions 320-355 (SDRCSGSNDCKNGGYPHPKQCDTCLCPNGLSGPKCE) constitute an EGF-like domain. The CUB domain occupies 365 to 478 (CGGKIVVKEE…VGFKLQARAT (114 aa)). A TSP type-1 domain is found at 503-552 (TDQWAEWGSWSQCSRSCGGCGIMSRVRVCRTKQCKGRRQEFSTCNLKACP).

It depends on Zn(2+) as a cofactor.

It is found in the secreted. Inhibited by 1,10-phenanthroline. Its function is as follows. Metalloprotease. Involved in molting, a process during larval stages in which a new cuticle is formed and the old cuticle is shed. The protein is Zinc metalloproteinase nas-36 of Haemonchus contortus (Barber pole worm).